Here is a 515-residue protein sequence, read N- to C-terminus: Probable cytochrome P450 6d4 (515 aa).

C457 serves as a coordination point for heme.

It belongs to the cytochrome P450 family. Heme serves as cofactor.

Its subcellular location is the endoplasmic reticulum membrane. The protein resides in the microsome membrane. Functionally, may be involved in the metabolism of insect hormones and in the breakdown of synthetic insecticides. The sequence is that of Probable cytochrome P450 6d4 (Cyp6d4) from Drosophila melanogaster (Fruit fly).